Reading from the N-terminus, the 144-residue chain is Large ribosomal subunit protein uL16 (144 aa).

This sequence belongs to the universal ribosomal protein uL16 family. As to quaternary structure, part of the 50S ribosomal subunit.

Functionally, binds 23S rRNA and is also seen to make contacts with the A and possibly P site tRNAs. The sequence is that of Large ribosomal subunit protein uL16 from Bacillus pumilus (strain SAFR-032).